The chain runs to 225 residues: Imidazole glycerol phosphate synthase subunit HisH (225 aa).

The region spanning 5–220 is the Glutamine amidotransferase type-1 domain; that stretch reads KNVIVDTGCA…LELDSTELNQ (216 aa). C80 (nucleophile) is an active-site residue. Active-site residues include H195 and E197.

In terms of assembly, heterodimer of HisH and HisF.

The protein resides in the cytoplasm. The catalysed reaction is 5-[(5-phospho-1-deoxy-D-ribulos-1-ylimino)methylamino]-1-(5-phospho-beta-D-ribosyl)imidazole-4-carboxamide + L-glutamine = D-erythro-1-(imidazol-4-yl)glycerol 3-phosphate + 5-amino-1-(5-phospho-beta-D-ribosyl)imidazole-4-carboxamide + L-glutamate + H(+). It catalyses the reaction L-glutamine + H2O = L-glutamate + NH4(+). The protein operates within amino-acid biosynthesis; L-histidine biosynthesis; L-histidine from 5-phospho-alpha-D-ribose 1-diphosphate: step 5/9. Its function is as follows. IGPS catalyzes the conversion of PRFAR and glutamine to IGP, AICAR and glutamate. The HisH subunit catalyzes the hydrolysis of glutamine to glutamate and ammonia as part of the synthesis of IGP and AICAR. The resulting ammonia molecule is channeled to the active site of HisF. The polypeptide is Imidazole glycerol phosphate synthase subunit HisH (Colwellia psychrerythraea (strain 34H / ATCC BAA-681) (Vibrio psychroerythus)).